The chain runs to 318 residues: NADH-ubiquinone oxidoreductase chain 1 (318 aa).

8 helical membrane-spanning segments follow: residues 5-25 (IISSFLTFVMILIAVAFLTLI), 69-89 (SIFLFILAPALAISLALILWI), 102-122 (LGLMFILAISSLSVYSLLTSG), 148-168 (LGLMIVALTILSGGFDLKLFI), 174-194 (IWLLFPMWPIFLMWFISTLAE), 215-235 (VEFSGGLFALFFLAEYANILF), 253-273 (LYFSASMTMKTMFLIFLFLWV), and 293-313 (FLPITLSLLIFQFSMSLFFGV).

It belongs to the complex I subunit 1 family.

The protein localises to the mitochondrion inner membrane. The enzyme catalyses a ubiquinone + NADH + 5 H(+)(in) = a ubiquinol + NAD(+) + 4 H(+)(out). Functionally, core subunit of the mitochondrial membrane respiratory chain NADH dehydrogenase (Complex I) that is believed to belong to the minimal assembly required for catalysis. Complex I functions in the transfer of electrons from NADH to the respiratory chain. The immediate electron acceptor for the enzyme is believed to be ubiquinone. This is NADH-ubiquinone oxidoreductase chain 1 (MT-ND1) from Myxine glutinosa (Atlantic hagfish).